The primary structure comprises 162 residues: Sec-independent protein translocase protein TatB (162 aa).

Residues 1 to 21 (MFDIGFLEIIVIMVIALIVIG) traverse the membrane as a helical segment. Residues 86-162 (IQDEFGIDQE…ESTPESSNKS (77 aa)) are disordered. Residues 108–117 (FSGTQFNKAP) show a composition bias toward polar residues. Over residues 123–135 (PTTEESPSSTPET) the composition is skewed to low complexity. Polar residues predominate over residues 147–162 (DVSAPSESTPESSNKS).

Belongs to the TatB family. In terms of assembly, the Tat system comprises two distinct complexes: a TatABC complex, containing multiple copies of TatA, TatB and TatC subunits, and a separate TatA complex, containing only TatA subunits. Substrates initially bind to the TatABC complex, which probably triggers association of the separate TatA complex to form the active translocon.

It localises to the cell inner membrane. Functionally, part of the twin-arginine translocation (Tat) system that transports large folded proteins containing a characteristic twin-arginine motif in their signal peptide across membranes. Together with TatC, TatB is part of a receptor directly interacting with Tat signal peptides. TatB may form an oligomeric binding site that transiently accommodates folded Tat precursor proteins before their translocation. The polypeptide is Sec-independent protein translocase protein TatB (Hydrogenovibrio crunogenus (strain DSM 25203 / XCL-2) (Thiomicrospira crunogena)).